Consider the following 180-residue polypeptide: ATP-dependent protease subunit HslV (180 aa).

Threonine 2 is an active-site residue. The Na(+) site is built by glycine 158, cysteine 161, and threonine 164.

This sequence belongs to the peptidase T1B family. HslV subfamily. As to quaternary structure, a double ring-shaped homohexamer of HslV is capped on each side by a ring-shaped HslU homohexamer. The assembly of the HslU/HslV complex is dependent on binding of ATP.

It localises to the cytoplasm. It carries out the reaction ATP-dependent cleavage of peptide bonds with broad specificity.. With respect to regulation, allosterically activated by HslU binding. Protease subunit of a proteasome-like degradation complex believed to be a general protein degrading machinery. This chain is ATP-dependent protease subunit HslV, found in Baumannia cicadellinicola subsp. Homalodisca coagulata.